A 178-amino-acid polypeptide reads, in one-letter code: Translation initiation factor IF-3 (178 aa).

The protein belongs to the IF-3 family. Monomer.

The protein resides in the cytoplasm. In terms of biological role, IF-3 binds to the 30S ribosomal subunit and shifts the equilibrium between 70S ribosomes and their 50S and 30S subunits in favor of the free subunits, thus enhancing the availability of 30S subunits on which protein synthesis initiation begins. This chain is Translation initiation factor IF-3, found in Macrococcus caseolyticus (strain JCSC5402) (Macrococcoides caseolyticum).